A 245-amino-acid chain; its full sequence is RAD51-like protein 1 (245 aa).

As to quaternary structure, interacts with brc-2 and rad-51.

It is found in the nucleus. Has a role in the homologous recombination repair (HRR) of genomic DNA during meiosis. Required for rad-51 recruitment onto ssDNA gaps generated at stalled replication fork barriers. The chain is RAD51-like protein 1 (rfs-1) from Caenorhabditis elegans.